Consider the following 185-residue polypeptide: Ribosome-recycling factor (185 aa).

Belongs to the RRF family.

The protein resides in the cytoplasm. Its function is as follows. Responsible for the release of ribosomes from messenger RNA at the termination of protein biosynthesis. May increase the efficiency of translation by recycling ribosomes from one round of translation to another. This chain is Ribosome-recycling factor, found in Shewanella woodyi (strain ATCC 51908 / MS32).